We begin with the raw amino-acid sequence, 217 residues long: Adenylate kinase (217 aa).

10-15 (GAGKGT) contributes to the ATP binding site. Positions 30-59 (STGDMLRAQVKAGTALGLEAKKHMDAGGLV) are NMP. Residues T31, R36, 57–59 (GLV), 85–88 (GFPR), and Q92 each bind AMP. Residues 122 to 159 (GRRAHLASGRTYHVKFNPPKVEGIDDVTGEPLVQRDDD) form an LID region. Residues R123 and 132–133 (TY) each bind ATP. AMP-binding residues include R156 and R167. ATP is bound at residue G203.

It belongs to the adenylate kinase family. Monomer.

The protein localises to the cytoplasm. It catalyses the reaction AMP + ATP = 2 ADP. It participates in purine metabolism; AMP biosynthesis via salvage pathway; AMP from ADP: step 1/1. In terms of biological role, catalyzes the reversible transfer of the terminal phosphate group between ATP and AMP. Plays an important role in cellular energy homeostasis and in adenine nucleotide metabolism. This chain is Adenylate kinase, found in Dechloromonas aromatica (strain RCB).